The chain runs to 29 residues: YCQKWMWTCDSARKCCEGLVCRLWCKKII.

3 disulfides stabilise this stretch: Cys2–Cys16, Cys9–Cys21, and Cys15–Cys25. At Ile29 the chain carries Isoleucine amide.

The protein belongs to the neurotoxin 30 (phrixotoxin) family. In terms of tissue distribution, expressed by the venom gland.

Its subcellular location is the secreted. Its function is as follows. Potent and specific blocker of Kv4.2/KCND2 (IC(50)=5 nM) and Kv4.3/KCND3 (IC(50)=28 nM) potassium channels. Acts by altering the gating properties of these channels. Also shows moderate inhibition on human voltage-gated sodium channel Nav1.7/SCN9A activation (IC(50)=423 nM). In Paraphysa scrofa (Chilean copper tarantula), this protein is Kappa-theraphotoxin-Ps1a.